The following is a 551-amino-acid chain: Meiotically up-regulated gene 184 protein (551 aa).

The J domain maps to 12 to 78; that stretch reads DYYAILKLQK…TKRLIYDQLF (67 aa). Over residues 85-122 the composition is skewed to polar residues; that stretch reads RSQYKPNSTSNPSKHTSAYASYNKGKNSKWSSPFASTT. Disordered regions lie at residues 85 to 153, 176 to 226, and 334 to 359; these read RSQY…FPRD, RQEP…SVYK, and EAES…TRNN. Positions 124–133 are enriched in basic and acidic residues; the sequence is KPQESSEKYS. Positions 134–146 are enriched in basic residues; sequence KKSSTRKKEHFNK. 2 stretches are compositionally biased toward basic and acidic residues: residues 176-187 and 203-219; these read RQEPESLKKENN and GPKD…KIPE.

It localises to the cytoplasm. Its subcellular location is the cytoskeleton. Its function is as follows. Has a role in sporulation. The polypeptide is Meiotically up-regulated gene 184 protein (mug184) (Schizosaccharomyces pombe (strain 972 / ATCC 24843) (Fission yeast)).